A 157-amino-acid chain; its full sequence is Ribosome maturation factor RimP (157 aa).

The protein belongs to the RimP family.

It localises to the cytoplasm. Functionally, required for maturation of 30S ribosomal subunits. This Petrotoga mobilis (strain DSM 10674 / SJ95) protein is Ribosome maturation factor RimP.